We begin with the raw amino-acid sequence, 546 residues long: G1/S-specific cyclin CLN1 (546 aa).

The disordered stretch occupies residues 224–265; sequence SNGKEWSCKRKSQSSDDSDATVEEHISSSPQSTGLDGDTTTM.

This sequence belongs to the cyclin family.

Its function is as follows. Essential for the control of the cell cycle at the G1/S (start) transition. Interacts with the CDC28 protein kinase to form MPF. This is G1/S-specific cyclin CLN1 (CLN1) from Saccharomyces cerevisiae (strain ATCC 204508 / S288c) (Baker's yeast).